We begin with the raw amino-acid sequence, 456 residues long: MMDHLVETNSVPSRLVEERLDEIRRVMGKADDDPLRIVGVGAGAWGSVFIAMLQENYGKFRGKVSVRIWRRGGRAIDKATAEHLFEVINSREELLRRLIRRCAYLKYVEARLGDRVLYADEILKDGFCLNMIETPLCPLKVVTNLQEAVWDADIVINGLPSTETFQVFNEISKYWKERVNAPVIISLAKGVEAEFEPHPRIVTPTQMIHRATGIPLENILYLGGPNIASEVYNKEYANARICGSEKWRKPLGKFLRQSHFIVWDNSDLITHEVMGGLKNVYAIGAGMVATLTKESATSKSVYFAHCTSEMIFITHLLAKEPEKLAGPLLADTYVTLLKGRNAWYGQKLAKGELSLEMGDSIKGKGMIQGVSAVKAFFELLNQSSLSLQHPEEGKPVTPAELCPILKMLYRILITREFSCEAILEALRDETMNDPRELIEIAHSHLFFQPWLLGQKP.

Residues 41-46 (GAGAWG), K189, and A228 each bind NAD(+). A substrate-binding site is contributed by K189. Residue K278 is the Proton acceptor of the active site. NAD(+) contacts are provided by R340 and Q368. Substrate is bound at residue 340-341 (RN).

Belongs to the NAD-dependent glycerol-3-phosphate dehydrogenase family. Homodimer.

The protein resides in the cytoplasm. The catalysed reaction is sn-glycerol 3-phosphate + NAD(+) = dihydroxyacetone phosphate + NADH + H(+). In terms of biological role, required for glycerol-3-phosphate (G3P) accumulation during systemic acquired resistance (SAR) establishment. The chain is Glycerol-3-phosphate dehydrogenase [NAD(+)] At3g07690, cytosolic from Arabidopsis thaliana (Mouse-ear cress).